The primary structure comprises 490 residues: Sporulation-specific protein 1 (490 aa).

Residues 18-272 enclose the Protein kinase domain; that stretch reads YSIQSCIGRG…AYNLLSFEFV (255 aa). Residues 24–32 and K47 each bind ATP; that span reads IGRGNFGDV. The Proton acceptor role is filled by D141.

Belongs to the protein kinase superfamily. STE Ser/Thr protein kinase family. STE20 subfamily.

Its subcellular location is the nucleus. It is found in the cytoplasm. It catalyses the reaction L-seryl-[protein] + ATP = O-phospho-L-seryl-[protein] + ADP + H(+). It carries out the reaction L-threonyl-[protein] + ATP = O-phospho-L-threonyl-[protein] + ADP + H(+). Functionally, serine/threonine protein kinase required for spore wall development. The protein is Sporulation-specific protein 1 (SPS1) of Saccharomyces cerevisiae (strain ATCC 204508 / S288c) (Baker's yeast).